The sequence spans 190 residues: Peptidyl-tRNA hydrolase (190 aa).

Y14 is a tRNA binding site. The Proton acceptor role is filled by H19. Y64, N66, and N112 together coordinate tRNA.

It belongs to the PTH family. Monomer.

The protein resides in the cytoplasm. The catalysed reaction is an N-acyl-L-alpha-aminoacyl-tRNA + H2O = an N-acyl-L-amino acid + a tRNA + H(+). Its function is as follows. Hydrolyzes ribosome-free peptidyl-tRNAs (with 1 or more amino acids incorporated), which drop off the ribosome during protein synthesis, or as a result of ribosome stalling. Functionally, catalyzes the release of premature peptidyl moieties from peptidyl-tRNA molecules trapped in stalled 50S ribosomal subunits, and thus maintains levels of free tRNAs and 50S ribosomes. The sequence is that of Peptidyl-tRNA hydrolase from Pelodictyon phaeoclathratiforme (strain DSM 5477 / BU-1).